Here is a 453-residue protein sequence, read N- to C-terminus: O-methyltransferase bik3 (453 aa).

Residues 1–25 are disordered; the sequence is MVSNGISNGTNGTNGTTTNGTNGVN. The segment covering 8 to 25 has biased composition (low complexity); the sequence is NGTNGTNGTTTNGTNGVN. Residue D305 participates in S-adenosyl-L-methionine binding. The Proton acceptor role is filled by H355.

Belongs to the class I-like SAM-binding methyltransferase superfamily. Cation-independent O-methyltransferase family. COMT subfamily.

It participates in secondary metabolite biosynthesis. In terms of biological role, O-methyltransferase; part of the gene cluster that mediates the biosynthesis of bikaverin, a red pigment also considered as a mycotoxin. The first stage is catalyzed by the polyketide synthase bik1, which catalyzes the formation of the intermediate SMA76a also knowm as pre-bikaverin. FAD-dependent monooxygenase bik2 might then be responsible for the oxidation of pre-bikaverin to oxo-pre-bikaverin which is in turn methylated by the O-methyltransferase bik3 to me-oxo-pre-bikaverin. A further cycle of oxydation and methylation by bik2 and bik3 leads to the final product of bikaverin, via a nor-bikaverin intermediate. This chain is O-methyltransferase bik3, found in Gibberella fujikuroi (strain CBS 195.34 / IMI 58289 / NRRL A-6831) (Bakanae and foot rot disease fungus).